We begin with the raw amino-acid sequence, 248 residues long: Proteasome subunit alpha (248 aa).

Ser2 is modified (N-acetylserine; partial).

This sequence belongs to the peptidase T1A family. As to quaternary structure, the 20S proteasome core is composed of 14 alpha and 14 beta subunits that assemble into four stacked heptameric rings, resulting in a barrel-shaped structure. The two inner rings, each composed of seven catalytic beta subunits, are sandwiched by two outer rings, each composed of seven alpha subunits. The catalytic chamber with the active sites is on the inside of the barrel. Has a gated structure, the ends of the cylinder being occluded by the N-termini of the alpha-subunits. Is capped by the proteasome-associated ATPase, ARC.

It localises to the cytoplasm. Its pathway is protein degradation; proteasomal Pup-dependent pathway. With respect to regulation, the formation of the proteasomal ATPase ARC-20S proteasome complex, likely via the docking of the C-termini of ARC into the intersubunit pockets in the alpha-rings, may trigger opening of the gate for substrate entry. Interconversion between the open-gate and close-gate conformations leads to a dynamic regulation of the 20S proteasome proteolysis activity. Functionally, component of the proteasome core, a large protease complex with broad specificity involved in protein degradation. This chain is Proteasome subunit alpha, found in Mycobacterium tuberculosis (strain CDC 1551 / Oshkosh).